The following is a 248-amino-acid chain: 1-(5-phosphoribosyl)-5-[(5-phosphoribosylamino)methylideneamino] imidazole-4-carboxamide isomerase (248 aa).

The active-site Proton acceptor is the Asp-8. Asp-127 acts as the Proton donor in catalysis.

It belongs to the HisA/HisF family.

The protein resides in the cytoplasm. It carries out the reaction 1-(5-phospho-beta-D-ribosyl)-5-[(5-phospho-beta-D-ribosylamino)methylideneamino]imidazole-4-carboxamide = 5-[(5-phospho-1-deoxy-D-ribulos-1-ylimino)methylamino]-1-(5-phospho-beta-D-ribosyl)imidazole-4-carboxamide. It functions in the pathway amino-acid biosynthesis; L-histidine biosynthesis; L-histidine from 5-phospho-alpha-D-ribose 1-diphosphate: step 4/9. In Thermotoga neapolitana (strain ATCC 49049 / DSM 4359 / NBRC 107923 / NS-E), this protein is 1-(5-phosphoribosyl)-5-[(5-phosphoribosylamino)methylideneamino] imidazole-4-carboxamide isomerase.